An 87-amino-acid chain; its full sequence is Antitoxin epsilon (87 aa).

This sequence belongs to the epsilon antitoxin family. As to quaternary structure, in the presence of the zeta toxin, forms an inactive PezA(2)PezT(2) heterotetramer.

Its function is as follows. Antitoxin component of a type II toxin-antitoxin (TA) system. Neutralizes the toxic effect of cognate zeta toxin. Part of a postsegregational killing (PSK) system involved in the killing of plasmid-free cells. Continuous synthesis of the epsilon antitoxin is required to counteract the zeta toxin. This Lactococcus lactis subsp. lactis (Streptococcus lactis) protein is Antitoxin epsilon.